A 633-amino-acid polypeptide reads, in one-letter code: tRNA uridine 5-carboxymethylaminomethyl modification enzyme MnmG (633 aa).

FAD contacts are provided by residues 13–18 (GGGHAG), valine 125, and serine 180. 273–287 (GPRYCPSIEDKITRF) provides a ligand contact to NAD(+). Residue glutamine 370 participates in FAD binding.

The protein belongs to the MnmG family. Homodimer. Heterotetramer of two MnmE and two MnmG subunits. The cofactor is FAD.

Its subcellular location is the cytoplasm. Functionally, NAD-binding protein involved in the addition of a carboxymethylaminomethyl (cmnm) group at the wobble position (U34) of certain tRNAs, forming tRNA-cmnm(5)s(2)U34. This Alteromonas mediterranea (strain DSM 17117 / CIP 110805 / LMG 28347 / Deep ecotype) protein is tRNA uridine 5-carboxymethylaminomethyl modification enzyme MnmG.